The primary structure comprises 456 residues: 26S proteasome non-ATPase regulatory subunit 12 (456 aa).

Ala2 bears the N-acetylalanine mark. Lys92 is covalently cross-linked (Glycyl lysine isopeptide (Lys-Gly) (interchain with G-Cter in SUMO1); alternate). Lys92 is covalently cross-linked (Glycyl lysine isopeptide (Lys-Gly) (interchain with G-Cter in SUMO2); alternate). 2 positions are modified to N6-acetyllysine: Lys221 and Lys368. The region spanning 242 to 420 (SICKHYRAIY…GIINFQRPKD (179 aa)) is the PCI domain.

This sequence belongs to the proteasome subunit p55 family. In terms of assembly, component of the 19S proteasome regulatory particle complex. The 26S proteasome consists of a 20S core particle (CP) and two 19S regulatory subunits (RP). The regulatory particle is made of a lid composed of 9 subunits including PSMD12, a base containing 6 ATPases and few additional components. Interacts with ERCC6.

Functionally, component of the 26S proteasome, a multiprotein complex involved in the ATP-dependent degradation of ubiquitinated proteins. This complex plays a key role in the maintenance of protein homeostasis by removing misfolded or damaged proteins, which could impair cellular functions, and by removing proteins whose functions are no longer required. Therefore, the proteasome participates in numerous cellular processes, including cell cycle progression, apoptosis, or DNA damage repair. This chain is 26S proteasome non-ATPase regulatory subunit 12 (PSMD12), found in Bos taurus (Bovine).